The following is a 383-amino-acid chain: NIPA-like protein 2 (383 aa).

N-linked (GlcNAc...) asparagine glycosylation is found at Asn-23 and Asn-33. The next 7 helical transmembrane spans lie at 46-66 (IHLF…ISLN), 88-108 (VLWW…FAAY), 110-130 (FAPI…SAII), 144-164 (LLGT…APNI), 177-197 (LVGW…CILL), 209-229 (VILL…VKAV), and 243-263 (LTYP…VFQV). N-linked (GlcNAc...) asparagine glycosylation occurs at Asn-274. 2 consecutive transmembrane segments (helical) span residues 278–298 (VVPV…IIFY) and 306–326 (FLTV…VFLV). The interval 355–383 (QPDSHSLSYGTLPDGSDSTKSQSGEKKEV) is disordered.

Belongs to the NIPA family.

The protein localises to the membrane. This is NIPA-like protein 2 (NIPAL2) from Homo sapiens (Human).